A 609-amino-acid chain; its full sequence is Replication protein A 70 kDa DNA-binding subunit (609 aa).

Residues 112 to 164 are disordered; sequence IGNPHPYNDGQGPPQPAAPAPASAPPPSKPQNISAPPPPSMNRGASKLFGGGS. Residues 124 to 151 are compositionally biased toward pro residues; sequence PPQPAAPAPASAPPPSKPQNISAPPPPS. Positions 189 to 273 form a DNA-binding region, OB; it reads WTVRARVTNK…VKNDYEMTFN (85 aa). Residues 472-494 form a C4-type zinc finger; that stretch reads CPSQDCNKKVIDQQNGLFRCEKC.

Belongs to the replication factor A protein 1 family. Component of the heterotrimeric canonical replication protein A complex (RPA). Interacts with rpain-a.

It is found in the nucleus. The protein resides in the PML body. In terms of biological role, as part of the heterotrimeric replication protein A complex (RPA/RP-A), binds and stabilizes single-stranded DNA intermediates, that form during DNA replication or upon DNA stress. It prevents their reannealing and in parallel, recruits and activates different proteins and complexes involved in DNA metabolism. Thereby, it plays an essential role both in DNA replication and the cellular response to DNA damage. This Xenopus tropicalis (Western clawed frog) protein is Replication protein A 70 kDa DNA-binding subunit (rpa1).